A 601-amino-acid polypeptide reads, in one-letter code: Abscisic acid cluster transcription factor abl7 (601 aa).

A DNA-binding region (zn(2)-C6 fungal-type) is located at residues 13–40; it reads CDECRRRKLKCDRVRPQCGTCALSESEC.

The protein resides in the nucleus. Functionally, transcription factor that regulates the expression of the gene cluster that mediates the biosynthesis of abscisic acid (ABA), a phytohormone that acts antagonistically toward salicylic acid (SA), jasmonic acid (JA) and ethylene (ETH) signaling, to impede plant defense responses. In Leptosphaeria maculans (strain JN3 / isolate v23.1.3 / race Av1-4-5-6-7-8) (Blackleg fungus), this protein is Abscisic acid cluster transcription factor abl7.